Reading from the N-terminus, the 118-residue chain is Putative ankyrin repeat protein R747 (118 aa).

An ANK repeat occupies 70-99 (NCYYLLDYAIMKNDIPVIVTLIEKGANINR).

The sequence is that of Putative ankyrin repeat protein R747 from Acanthamoeba polyphaga (Amoeba).